Reading from the N-terminus, the 412-residue chain is Imidazolonepropionase (412 aa).

Residues His-76 and His-78 each contribute to the Fe(3+) site. Zn(2+)-binding residues include His-76 and His-78. 4-imidazolone-5-propanoate is bound by residues Arg-85, Tyr-148, and His-181. Tyr-148 lines the N-formimidoyl-L-glutamate pocket. A Fe(3+)-binding site is contributed by His-242. His-242 serves as a coordination point for Zn(2+). Glu-245 serves as a coordination point for 4-imidazolone-5-propanoate. Residue Asp-317 coordinates Fe(3+). Position 317 (Asp-317) interacts with Zn(2+). Residues Asn-319 and Gly-321 each coordinate N-formimidoyl-L-glutamate. Ser-322 is a 4-imidazolone-5-propanoate binding site.

It belongs to the metallo-dependent hydrolases superfamily. HutI family. Zn(2+) serves as cofactor. The cofactor is Fe(3+).

Its subcellular location is the cytoplasm. The enzyme catalyses 4-imidazolone-5-propanoate + H2O = N-formimidoyl-L-glutamate. Its pathway is amino-acid degradation; L-histidine degradation into L-glutamate; N-formimidoyl-L-glutamate from L-histidine: step 3/3. In terms of biological role, catalyzes the hydrolytic cleavage of the carbon-nitrogen bond in imidazolone-5-propanoate to yield N-formimidoyl-L-glutamate. It is the third step in the universal histidine degradation pathway. This is Imidazolonepropionase from Staphylococcus aureus (strain USA300 / TCH1516).